The primary structure comprises 92 residues: DNA-directed RNA polymerase subunit Rpo11 (92 aa).

Belongs to the archaeal Rpo11/eukaryotic RPB11/RPC19 RNA polymerase subunit family. Part of the RNA polymerase complex.

It localises to the cytoplasm. The catalysed reaction is RNA(n) + a ribonucleoside 5'-triphosphate = RNA(n+1) + diphosphate. In terms of biological role, DNA-dependent RNA polymerase (RNAP) catalyzes the transcription of DNA into RNA using the four ribonucleoside triphosphates as substrates. This is DNA-directed RNA polymerase subunit Rpo11 from Methanosarcina mazei (strain ATCC BAA-159 / DSM 3647 / Goe1 / Go1 / JCM 11833 / OCM 88) (Methanosarcina frisia).